A 153-amino-acid polypeptide reads, in one-letter code: Pheromone-binding protein Gp-9 (153 aa).

Positions 1 to 19 are cleaved as a signal peptide; it reads MKTFVLHIFIFALVAFASA. 3 cysteine pairs are disulfide-bonded: Cys37-Cys77, Cys73-Cys129, and Cys118-Cys138.

This sequence belongs to the PBP/GOBP family. As to quaternary structure, homodimer.

Its subcellular location is the secreted. Its function is as follows. Colony queen number, a major feature of social organization, is associated with worker genotype for Gp-9. Colonies are headed by either a single reproductive queen (monogyne form) or multiple queens (polygyne form). Differences in worker Gp-9 genotypes between social forms may cause differences in workers' abilities to recognize queens and regulate their numbers. The chain is Pheromone-binding protein Gp-9 from Solenopsis substituta (Fire ant).